The primary structure comprises 190 residues: MAVEIAADIRRGNIIEHTDGQLYVVLKAESFRPGKGTPTTTIEMRRISDGIKVVNTFKTSEKLEKAFVEEVEHTYLYPEGDNFVFMNSANYEQVTVSGAMVGDGAPYLQENMPVSLQMFNGDPVSITLPPRFTAEIVETEPVVKGQTASGSYKPAILENGVRIMVPAHVGVGTRVIINTEDGTYLERAKD.

The protein belongs to the elongation factor P family.

The protein localises to the cytoplasm. The protein operates within protein biosynthesis; polypeptide chain elongation. Functionally, involved in peptide bond synthesis. Stimulates efficient translation and peptide-bond synthesis on native or reconstituted 70S ribosomes in vitro. Probably functions indirectly by altering the affinity of the ribosome for aminoacyl-tRNA, thus increasing their reactivity as acceptors for peptidyl transferase. The chain is Elongation factor P from Hyphomonas neptunium (strain ATCC 15444).